Consider the following 506-residue polypeptide: RNA-splicing ligase RtcB homolog (506 aa).

5 residues coordinate Mn(2+): Asp120, Cys123, His228, His260, and His354. 227–231 contacts GMP; that stretch reads NHYAE. GMP contacts are provided by residues 354 to 355, 403 to 406, Ser410, 429 to 432, and Lys505; these read HN, GGTM, and HGAG. The active-site GMP-histidine intermediate is His429.

Belongs to the RtcB family. As to quaternary structure, catalytic component of the tRNA-splicing ligase complex. Mn(2+) serves as cofactor.

The enzyme catalyses a 3'-end 3'-phospho-ribonucleotide-RNA + a 5'-end dephospho-ribonucleoside-RNA + GTP = a ribonucleotidyl-ribonucleotide-RNA + GMP + diphosphate. It carries out the reaction a 3'-end 2',3'-cyclophospho-ribonucleotide-RNA + a 5'-end dephospho-ribonucleoside-RNA + GTP + H2O = a ribonucleotidyl-ribonucleotide-RNA + GMP + diphosphate + H(+). In terms of biological role, catalytic subunit of the tRNA-splicing ligase complex that acts by directly joining spliced tRNA halves to mature-sized tRNAs by incorporating the precursor-derived splice junction phosphate into the mature tRNA as a canonical 3',5'-phosphodiester. May act as an RNA ligase with broad substrate specificity, and may function toward other RNAs. This is RNA-splicing ligase RtcB homolog from Plasmodium falciparum (isolate 3D7).